An 85-amino-acid chain; its full sequence is Large ribosomal subunit protein bL27 (85 aa).

A disordered region spans residues 1–21; the sequence is MAHKKGVGSTRNGRDSDGQRL.

It belongs to the bacterial ribosomal protein bL27 family.

In Geotalea uraniireducens (strain Rf4) (Geobacter uraniireducens), this protein is Large ribosomal subunit protein bL27.